The primary structure comprises 215 residues: Small ribosomal subunit protein uS7 (215 aa).

The protein belongs to the universal ribosomal protein uS7 family. Part of the 30S ribosomal subunit.

One of the primary rRNA binding proteins, it binds directly to 16S rRNA where it nucleates assembly of the head domain of the 30S subunit. Is located at the subunit interface close to the decoding center. This chain is Small ribosomal subunit protein uS7, found in Pyrococcus furiosus (strain ATCC 43587 / DSM 3638 / JCM 8422 / Vc1).